Reading from the N-terminus, the 675-residue chain is Neurexin-3b-beta (675 aa).

The N-terminal stretch at 1–30 (MRPHFKTRYPQWLSCMLPLVTGCVFGAVWG) is a signal peptide. Residues 31 to 599 (SNLDSTVVLS…EVIRESSSTT (569 aa)) lie on the Extracellular side of the membrane. The region spanning 81-281 (ATYIFGKGGG…HANIKINGSV (201 aa)) is the Laminin G-like domain. 2 disordered regions span residues 313–337 (TTLS…DIVS) and 490–534 (FKPK…MNNR). The segment covering 325–335 (SPPTIQTTDDI) has biased composition (polar residues). A helical transmembrane segment spans residues 600–620 (GMVVGIVSAAALCILILLYAM). Residues 621–675 (YKYRNRDEGSYQVDETRNYISNSAQNNGTVVKDKQPSTKGASNKRPKDKDKEYYV) are Cytoplasmic-facing. The segment at 642–675 (NSAQNNGTVVKDKQPSTKGASNKRPKDKDKEYYV) is disordered. Over residues 665–675 (RPKDKDKEYYV) the composition is skewed to basic and acidic residues.

The protein belongs to the neurexin family. Processed by alpha-secretase leading to the formation of an extracellular soluble protein as well as a C-terminal membrane-embedded fragment (CTF). Proteolysis of these CTFs by gamma-secretase releases intracellular domains (ICDs) and extracellular peptides.

It localises to the membrane. In terms of biological role, neuronal cell surface protein that may be involved in cell recognition and cell adhesion. This chain is Neurexin-3b-beta (nrxn3b), found in Danio rerio (Zebrafish).